A 132-amino-acid polypeptide reads, in one-letter code: Small ribosomal subunit protein uS8 (132 aa).

Belongs to the universal ribosomal protein uS8 family. As to quaternary structure, part of the 30S ribosomal subunit. Contacts proteins S5 and S12.

In terms of biological role, one of the primary rRNA binding proteins, it binds directly to 16S rRNA central domain where it helps coordinate assembly of the platform of the 30S subunit. In Roseiflexus castenholzii (strain DSM 13941 / HLO8), this protein is Small ribosomal subunit protein uS8.